The primary structure comprises 449 residues: Probable glycine dehydrogenase (decarboxylating) subunit 1 (449 aa).

The protein belongs to the GcvP family. N-terminal subunit subfamily. In terms of assembly, the glycine cleavage system is composed of four proteins: P, T, L and H. In this organism, the P 'protein' is a heterodimer of two subunits.

It catalyses the reaction N(6)-[(R)-lipoyl]-L-lysyl-[glycine-cleavage complex H protein] + glycine + H(+) = N(6)-[(R)-S(8)-aminomethyldihydrolipoyl]-L-lysyl-[glycine-cleavage complex H protein] + CO2. Its function is as follows. The glycine cleavage system catalyzes the degradation of glycine. The P protein binds the alpha-amino group of glycine through its pyridoxal phosphate cofactor; CO(2) is released and the remaining methylamine moiety is then transferred to the lipoamide cofactor of the H protein. This chain is Probable glycine dehydrogenase (decarboxylating) subunit 1, found in Pyrococcus abyssi (strain GE5 / Orsay).